Consider the following 257-residue polypeptide: Pimeloyl-[acyl-carrier protein] methyl ester esterase (257 aa).

One can recognise an AB hydrolase-1 domain in the interval 16 to 242 (LVLLHGWGLN…AAHAPFISHP (227 aa)). Substrate contacts are provided by residues tryptophan 22, 82–83 (SL), and 143–147 (FLGLQ). Catalysis depends on serine 82, which acts as the Nucleophile. Catalysis depends on residues aspartate 207 and histidine 235. Histidine 235 contacts substrate.

Belongs to the AB hydrolase superfamily. Carboxylesterase BioH family. Monomer.

It localises to the cytoplasm. The enzyme catalyses 6-carboxyhexanoyl-[ACP] methyl ester + H2O = 6-carboxyhexanoyl-[ACP] + methanol + H(+). It functions in the pathway cofactor biosynthesis; biotin biosynthesis. Functionally, the physiological role of BioH is to remove the methyl group introduced by BioC when the pimeloyl moiety is complete. It allows to synthesize pimeloyl-ACP via the fatty acid synthetic pathway through the hydrolysis of the ester bonds of pimeloyl-ACP esters. This Sodalis glossinidius (strain morsitans) protein is Pimeloyl-[acyl-carrier protein] methyl ester esterase.